The primary structure comprises 54 residues: Ribulose bisphosphate carboxylase large chain (54 aa).

A propeptide spanning residues 1 to 2 is cleaved from the precursor; sequence MS. Pro-3 carries the N-acetylproline modification. The residue at position 14 (Lys-14) is an N6,N6,N6-trimethyllysine.

This sequence belongs to the RuBisCO large chain family. Type I subfamily. In terms of assembly, heterohexadecamer of 8 large chains and 8 small chains.

The protein localises to the plastid. It is found in the chloroplast. It carries out the reaction 2 (2R)-3-phosphoglycerate + 2 H(+) = D-ribulose 1,5-bisphosphate + CO2 + H2O. It catalyses the reaction D-ribulose 1,5-bisphosphate + O2 = 2-phosphoglycolate + (2R)-3-phosphoglycerate + 2 H(+). In terms of biological role, ruBisCO catalyzes two reactions: the carboxylation of D-ribulose 1,5-bisphosphate, the primary event in carbon dioxide fixation, as well as the oxidative fragmentation of the pentose substrate in the photorespiration process. Both reactions occur simultaneously and in competition at the same active site. This Rhamnus cathartica (Common buckthorn) protein is Ribulose bisphosphate carboxylase large chain (rbcL).